The primary structure comprises 588 residues: Lysophospholipase 2 (588 aa).

Residues 15 to 38 (NRALPNAPDGYTPQGETCPSKRPS) form a disordered region. One can recognise a PLA2c domain in the interval 31 to 574 (TCPSKRPSIR…KTYCWNGTIN (544 aa)). N-linked (GlcNAc...) asparagine glycans are attached at residues Asn-41, Asn-58, Asn-77, Asn-84, Asn-88, Asn-119, Asn-123, Asn-157, Asn-167, Asn-228, Asn-272, Asn-302, Asn-340, Asn-431, Asn-449, Asn-478, Asn-481, Asn-501, Asn-510, Asn-529, Asn-553, Asn-570, and Asn-574.

This sequence belongs to the lysophospholipase family.

It catalyses the reaction a 1-acyl-sn-glycero-3-phosphocholine + H2O = sn-glycerol 3-phosphocholine + a fatty acid + H(+). Catalyzes the release of fatty acids from lysophospholipids. The chain is Lysophospholipase 2 (plb2) from Aspergillus fumigatus (strain ATCC MYA-4609 / CBS 101355 / FGSC A1100 / Af293) (Neosartorya fumigata).